The chain runs to 367 residues: tRNA 2-selenouridine synthase (367 aa).

The region spanning 15–138 (FLQARPLIDV…LRTFLIQILE (124 aa)) is the Rhodanese domain. Cys98 serves as the catalytic S-selanylcysteine intermediate.

The protein belongs to the SelU family. As to quaternary structure, monomer.

The catalysed reaction is 5-methylaminomethyl-2-thiouridine(34) in tRNA + selenophosphate + (2E)-geranyl diphosphate + H2O + H(+) = 5-methylaminomethyl-2-selenouridine(34) in tRNA + (2E)-thiogeraniol + phosphate + diphosphate. It carries out the reaction 5-methylaminomethyl-2-thiouridine(34) in tRNA + (2E)-geranyl diphosphate = 5-methylaminomethyl-S-(2E)-geranyl-thiouridine(34) in tRNA + diphosphate. It catalyses the reaction 5-methylaminomethyl-S-(2E)-geranyl-thiouridine(34) in tRNA + selenophosphate + H(+) = 5-methylaminomethyl-2-(Se-phospho)selenouridine(34) in tRNA + (2E)-thiogeraniol. The enzyme catalyses 5-methylaminomethyl-2-(Se-phospho)selenouridine(34) in tRNA + H2O = 5-methylaminomethyl-2-selenouridine(34) in tRNA + phosphate. Involved in the post-transcriptional modification of the uridine at the wobble position (U34) of tRNA(Lys), tRNA(Glu) and tRNA(Gln). Catalyzes the conversion of 2-thiouridine (S2U-RNA) to 2-selenouridine (Se2U-RNA). Acts in a two-step process involving geranylation of 2-thiouridine (S2U) to S-geranyl-2-thiouridine (geS2U) and subsequent selenation of the latter derivative to 2-selenouridine (Se2U) in the tRNA chain. The protein is tRNA 2-selenouridine synthase of Shewanella denitrificans (strain OS217 / ATCC BAA-1090 / DSM 15013).